The primary structure comprises 291 residues: Ribosomal RNA small subunit methyltransferase A (291 aa).

The S-adenosyl-L-methionine site is built by Asn28, Leu30, Gly55, Glu77, Asp103, and Asn123.

It belongs to the class I-like SAM-binding methyltransferase superfamily. rRNA adenine N(6)-methyltransferase family. RsmA subfamily.

It localises to the cytoplasm. It carries out the reaction adenosine(1518)/adenosine(1519) in 16S rRNA + 4 S-adenosyl-L-methionine = N(6)-dimethyladenosine(1518)/N(6)-dimethyladenosine(1519) in 16S rRNA + 4 S-adenosyl-L-homocysteine + 4 H(+). Specifically dimethylates two adjacent adenosines (A1518 and A1519) in the loop of a conserved hairpin near the 3'-end of 16S rRNA in the 30S particle. May play a critical role in biogenesis of 30S subunits. This is Ribosomal RNA small subunit methyltransferase A from Azorhizobium caulinodans (strain ATCC 43989 / DSM 5975 / JCM 20966 / LMG 6465 / NBRC 14845 / NCIMB 13405 / ORS 571).